The chain runs to 699 residues: Glycine--tRNA ligase beta subunit (699 aa).

It belongs to the class-II aminoacyl-tRNA synthetase family. Tetramer of two alpha and two beta subunits.

The protein resides in the cytoplasm. It catalyses the reaction tRNA(Gly) + glycine + ATP = glycyl-tRNA(Gly) + AMP + diphosphate. The sequence is that of Glycine--tRNA ligase beta subunit from Methylobacterium radiotolerans (strain ATCC 27329 / DSM 1819 / JCM 2831 / NBRC 15690 / NCIMB 10815 / 0-1).